We begin with the raw amino-acid sequence, 872 residues long: Alanine--tRNA ligase (872 aa).

4 residues coordinate Zn(2+): H567, H571, C669, and H673.

The protein belongs to the class-II aminoacyl-tRNA synthetase family. It depends on Zn(2+) as a cofactor.

Its subcellular location is the cytoplasm. It carries out the reaction tRNA(Ala) + L-alanine + ATP = L-alanyl-tRNA(Ala) + AMP + diphosphate. Its function is as follows. Catalyzes the attachment of alanine to tRNA(Ala) in a two-step reaction: alanine is first activated by ATP to form Ala-AMP and then transferred to the acceptor end of tRNA(Ala). Also edits incorrectly charged Ser-tRNA(Ala) and Gly-tRNA(Ala) via its editing domain. In Streptococcus pyogenes serotype M1, this protein is Alanine--tRNA ligase.